A 496-amino-acid polypeptide reads, in one-letter code: Lysine--tRNA ligase (496 aa).

The Mg(2+) site is built by Glu-408 and Glu-415.

Belongs to the class-II aminoacyl-tRNA synthetase family. In terms of assembly, homodimer. It depends on Mg(2+) as a cofactor.

Its subcellular location is the cytoplasm. The enzyme catalyses tRNA(Lys) + L-lysine + ATP = L-lysyl-tRNA(Lys) + AMP + diphosphate. This chain is Lysine--tRNA ligase, found in Legionella pneumophila (strain Paris).